Reading from the N-terminus, the 504-residue chain is Facilitated trehalose transporter Tret1 (504 aa).

At 1 to 39 the chain is on the cytoplasmic side; that stretch reads MELNNKEDSPRHTVPFVRQITEDGKAKLEIYRPTTNPIY. Residues 40–60 form a helical membrane-spanning segment; that stretch reads IYTQILAAIAVSMGSMVVGFA. Residues 61–87 lie on the Extracellular side of the membrane; it reads SAYTSPALVSMQNTTITSFKVTEQEAS. A glycan (N-linked (GlcNAc...) asparagine) is linked at asparagine 73. The chain crosses the membrane as a helical span at residues 88 to 108; that stretch reads WVGGIMPLAGLAGGIAGGPFI. At 109–120 the chain is on the cytoplasmic side; it reads EYLGRKNTILAT. A helical membrane pass occupies residues 121 to 141; it reads AVPFIVAWLLIAFANSIWMVL. The Extracellular segment spans residues 142–145; that stretch reads AGRA. The chain crosses the membrane as a helical span at residues 146 to 166; the sequence is LSGFCVGIASLSLPVYLGETV. Residues 167 to 171 are Cytoplasmic-facing; sequence QPEVR. Residues 172–192 traverse the membrane as a helical segment; the sequence is GTLGLLPTAFGNIGILICFVA. Residues 193–199 are Extracellular-facing; it reads GKYVNWS. N-linked (GlcNAc...) asparagine glycosylation is present at asparagine 197. Residues 200 to 220 form a helical membrane-spanning segment; it reads GLAFIGSILPIPFMVLTLLIP. The Cytoplasmic portion of the chain corresponds to 221 to 283; sequence ETPRWFVTRG…DLMKRSNLKP (63 aa). The helical transmembrane segment at 284–304 threads the bilayer; it reads LLIALGLMFFQQLSGINAVIF. Topologically, residues 305–320 are extracellular; it reads YTVSIFKDAGSTIDEN. The helical transmembrane segment at 321 to 341 threads the bilayer; that stretch reads LCTIIVGVVNFGATFFATVLI. At 342–347 the chain is on the cytoplasmic side; it reads DRLGRK. A helical membrane pass occupies residues 348 to 368; that stretch reads ILLYISEVAMVITLLTLGTFF. Topologically, residues 369-387 are extracellular; that stretch reads YYKNSGNDVSNIGWLPLAS. Residues 388-408 form a helical membrane-spanning segment; sequence FVIYVIGFSSGVGPIPWLMLG. The Cytoplasmic portion of the chain corresponds to 409–424; the sequence is EILPGKIRGSAASVAT. The helical transmembrane segment at 425-445 threads the bilayer; the sequence is GFNWTCTFIVTKTFADIVAAI. Residues 446-448 are Extracellular-facing; sequence GNH. The chain crosses the membrane as a helical span at residues 449–469; the sequence is GAFWFFGVICLIGLFFVIFFV. Topologically, residues 470-504 are cytoplasmic; it reads PETQGKSLEEIERKMMGRVRRMSSVANMKPLSFNM.

This sequence belongs to the major facilitator superfamily. Sugar transporter (TC 2.A.1.1) family. Trehalose transporter subfamily. In terms of tissue distribution, highest expression in the fat body. Not expressed in other tissues including the midgut, muscle, and integuments after 24 hours of dehydration.

Its subcellular location is the cell membrane. Its function is as follows. High-capacity facilitative transporter for trehalose, required to induce anhydrobiosis. Anhydrobiotic larvae can survive almost complete dehydration. Does not transport maltose, sucrose or lactose. Mediates the bidirectional transfer of trehalose. Responsible for the transport of trehalose synthesized in the fat body and the incorporation of trehalose into other tissues that require a carbon source, thereby regulating trehalose levels in the hemolymph. This chain is Facilitated trehalose transporter Tret1, found in Polypedilum vanderplanki (Sleeping chironomid midge).